Here is a 114-residue protein sequence, read N- to C-terminus: Iron-sulfur cluster insertion protein ErpA (114 aa).

Residues Cys42, Cys106, and Cys108 each contribute to the iron-sulfur cluster site.

The protein belongs to the HesB/IscA family. Homodimer. It depends on iron-sulfur cluster as a cofactor.

Functionally, required for insertion of 4Fe-4S clusters for at least IspG. The polypeptide is Iron-sulfur cluster insertion protein ErpA (Klebsiella pneumoniae subsp. pneumoniae (strain ATCC 700721 / MGH 78578)).